A 254-amino-acid polypeptide reads, in one-letter code: Pyridoxine 5'-phosphate synthase (254 aa).

Asn-8 provides a ligand contact to 3-amino-2-oxopropyl phosphate. 10 to 11 (DH) is a binding site for 1-deoxy-D-xylulose 5-phosphate. A 3-amino-2-oxopropyl phosphate-binding site is contributed by Arg-19. Residue His-44 is the Proton acceptor of the active site. The 1-deoxy-D-xylulose 5-phosphate site is built by Arg-46 and His-51. The Proton acceptor role is filled by Glu-74. Thr-104 is a 1-deoxy-D-xylulose 5-phosphate binding site. The active-site Proton donor is His-198. 3-amino-2-oxopropyl phosphate-binding positions include Gly-199 and 220–221 (GH).

This sequence belongs to the PNP synthase family. As to quaternary structure, homooctamer; tetramer of dimers.

Its subcellular location is the cytoplasm. The enzyme catalyses 3-amino-2-oxopropyl phosphate + 1-deoxy-D-xylulose 5-phosphate = pyridoxine 5'-phosphate + phosphate + 2 H2O + H(+). The protein operates within cofactor biosynthesis; pyridoxine 5'-phosphate biosynthesis; pyridoxine 5'-phosphate from D-erythrose 4-phosphate: step 5/5. Functionally, catalyzes the complicated ring closure reaction between the two acyclic compounds 1-deoxy-D-xylulose-5-phosphate (DXP) and 3-amino-2-oxopropyl phosphate (1-amino-acetone-3-phosphate or AAP) to form pyridoxine 5'-phosphate (PNP) and inorganic phosphate. This chain is Pyridoxine 5'-phosphate synthase, found in Caulobacter vibrioides (strain ATCC 19089 / CIP 103742 / CB 15) (Caulobacter crescentus).